Consider the following 401-residue polypeptide: (1R,4R,5S)-(-)-guaia-6,10(14)-diene synthase (401 aa).

The interval 1-21 is disordered; sequence MVKFDSGSESEMTNGDDLHIN. D134 and E139 together coordinate Mg(2+). The DDXXD motif motif lies at 134 to 138; sequence DDQFD. R242 provides a ligand contact to substrate. Residues N288 and S292 each coordinate Mg(2+). Residue K295 participates in substrate binding. D296 serves as a coordination point for Mg(2+). A substrate-binding site is contributed by 375–376; sequence RY.

The protein belongs to the terpene synthase family. Mg(2+) serves as cofactor.

The catalysed reaction is (2E,6E)-farnesyl diphosphate = (1R,4R,5S)-(-)-guaia-6,10(14)-diene + diphosphate. Its pathway is secondary metabolite biosynthesis; terpenoid biosynthesis. Functionally, catalyzes the conversion of (2E,6E)-farnesyl diphosphate (FPP) to yield the bicyclic sesquiterpene guaia-6,10(14)-diene via a 1,10-cyclization, which requires the abstraction of the pyrophosphate from FPP to yield the (E,E)-germacradienyl cation. The only accepted substrate is farnesyl diphosphate (FPP). The polypeptide is (1R,4R,5S)-(-)-guaia-6,10(14)-diene synthase (Fusarium proliferatum (strain ET1) (Orchid endophyte fungus)).